The chain runs to 396 residues: Cytochrome c biogenesis protein Ccs1 (396 aa).

Helical transmembrane passes span 22–42 (LKFS…GTII), 79–99 (SNFY…CSLK), and 162–182 (AGPL…AIHA).

It belongs to the Ccs1/CcsB family. May interact with CcsA.

The protein resides in the plastid. It localises to the chloroplast thylakoid membrane. Required during biogenesis of c-type cytochromes (cytochrome c6 and cytochrome f) at the step of heme attachment. The sequence is that of Cytochrome c biogenesis protein Ccs1 from Cyanidium caldarium (Red alga).